Consider the following 306-residue polypeptide: Acetyl-coenzyme A carboxylase carboxyl transferase subunit beta (306 aa).

A CoA carboxyltransferase N-terminal domain is found at 27–296 (LWHKCPSCEA…PKFVAAPIEP (270 aa)). The Zn(2+) site is built by C31, C34, C50, and C53. Residues 31 to 53 (CPSCEAVLYRPELEKTLDVCPKC) form a C4-type zinc finger.

The protein belongs to the AccD/PCCB family. As to quaternary structure, acetyl-CoA carboxylase is a heterohexamer composed of biotin carboxyl carrier protein (AccB), biotin carboxylase (AccC) and two subunits each of ACCase subunit alpha (AccA) and ACCase subunit beta (AccD). Requires Zn(2+) as cofactor.

The protein localises to the cytoplasm. The catalysed reaction is N(6)-carboxybiotinyl-L-lysyl-[protein] + acetyl-CoA = N(6)-biotinyl-L-lysyl-[protein] + malonyl-CoA. Its pathway is lipid metabolism; malonyl-CoA biosynthesis; malonyl-CoA from acetyl-CoA: step 1/1. In terms of biological role, component of the acetyl coenzyme A carboxylase (ACC) complex. Biotin carboxylase (BC) catalyzes the carboxylation of biotin on its carrier protein (BCCP) and then the CO(2) group is transferred by the transcarboxylase to acetyl-CoA to form malonyl-CoA. This Pseudomonas fluorescens (strain Pf0-1) protein is Acetyl-coenzyme A carboxylase carboxyl transferase subunit beta.